We begin with the raw amino-acid sequence, 292 residues long: Small ribosomal subunit biogenesis GTPase RsgA (292 aa).

The region spanning 64 to 221 (RSELFRPAVA…LVDTPGFSSL (158 aa)) is the CP-type G domain. Residues 113–116 (NKMD) and 164–172 (GPSGVGKST) each bind GTP. Zn(2+) contacts are provided by cysteine 245, cysteine 250, histidine 252, and cysteine 258.

It belongs to the TRAFAC class YlqF/YawG GTPase family. RsgA subfamily. In terms of assembly, monomer. Associates with 30S ribosomal subunit, binds 16S rRNA. The cofactor is Zn(2+).

The protein resides in the cytoplasm. Its function is as follows. One of several proteins that assist in the late maturation steps of the functional core of the 30S ribosomal subunit. Helps release RbfA from mature subunits. May play a role in the assembly of ribosomal proteins into the subunit. Circularly permuted GTPase that catalyzes slow GTP hydrolysis, GTPase activity is stimulated by the 30S ribosomal subunit. This is Small ribosomal subunit biogenesis GTPase RsgA from Clostridium botulinum (strain Loch Maree / Type A3).